We begin with the raw amino-acid sequence, 252 residues long: Phosphate import ATP-binding protein PstB (252 aa).

The region spanning 5-247 (MRGQDVKVFY…PKEQRTQDYI (243 aa)) is the ABC transporter domain. 37–44 (GPSGCGKS) provides a ligand contact to ATP.

This sequence belongs to the ABC transporter superfamily. Phosphate importer (TC 3.A.1.7) family. As to quaternary structure, the complex is composed of two ATP-binding proteins (PstB), two transmembrane proteins (PstC and PstA) and a solute-binding protein (PstS).

The protein resides in the cell inner membrane. It catalyses the reaction phosphate(out) + ATP + H2O = ADP + 2 phosphate(in) + H(+). In terms of biological role, part of the ABC transporter complex PstSACB involved in phosphate import. Responsible for energy coupling to the transport system. This chain is Phosphate import ATP-binding protein PstB, found in Bartonella henselae (strain ATCC 49882 / DSM 28221 / CCUG 30454 / Houston 1) (Rochalimaea henselae).